Consider the following 105-residue polypeptide: Thioredoxin (105 aa).

Residues 1–105 (MVNNVTDSSF…SLLDWINKSI (105 aa)) enclose the Thioredoxin domain. A disulfide bond links cysteine 30 and cysteine 33.

The protein belongs to the thioredoxin family.

Its function is as follows. Component of the thioredoxin-thioredoxin reductase system. Participates in various redox reactions through the reversible oxidation of its active center dithiol to a disulfide and catalyzes dithiol-disulfide exchange reactions. The sequence is that of Thioredoxin (trxA) from Rickettsia prowazekii (strain Madrid E).